A 338-amino-acid polypeptide reads, in one-letter code: Serine/threonine-protein kinase YabT (338 aa).

Residues 28-286 form the Protein kinase domain; the sequence is YTLRKQLGKG…PIKASPQPAT (259 aa). Residues 34 to 42 and Lys55 contribute to the ATP site; that span reads LGKGANGIV. Asp148 serves as the catalytic Proton acceptor. The segment at 266–312 is disordered; that stretch reads DAGQKAAQRKQPIKASPQPATRQRQQKPRQGKITKTRYTPKQKPAKS. A compositionally biased stretch (basic residues) spans 289–309; it reads RQQKPRQGKITKTRYTPKQKP.

The protein belongs to the protein kinase superfamily. Ser/Thr protein kinase family. Post-translationally, autophosphorylated.

It catalyses the reaction L-seryl-[protein] + ATP = O-phospho-L-seryl-[protein] + ADP + H(+). It carries out the reaction L-threonyl-[protein] + ATP = O-phospho-L-threonyl-[protein] + ADP + H(+). Functionally, plays a role in the cell's commitment to sporulation; phosphorylates DNA replication initiation-control protein YabA. Deletion of this kinase delays entry into sporulation but does not affect final spore yield. Overexpression decreases biofilm formation; phosphorylation of YabA probably prevents biofilm formation. The sequence is that of Serine/threonine-protein kinase YabT (yabT) from Bacillus subtilis (strain 168).